A 130-amino-acid polypeptide reads, in one-letter code: Small ribosomal subunit protein uS8A (130 aa).

It belongs to the universal ribosomal protein uS8 family. As to quaternary structure, component of the small ribosomal subunit (SSU). Mature yeast ribosomes consist of a small (40S) and a large (60S) subunit. The 40S small subunit contains 1 molecule of ribosomal RNA (18S rRNA) and at least 33 different proteins. The large 60S subunit contains 3 rRNA molecules (25S, 5.8S and 5S rRNA) and at least 46 different proteins.

The protein localises to the cytoplasm. Its subcellular location is the nucleus. Functionally, component of the ribosome, a large ribonucleoprotein complex responsible for the synthesis of proteins in the cell. The small ribosomal subunit (SSU) binds messenger RNAs (mRNAs) and translates the encoded message by selecting cognate aminoacyl-transfer RNA (tRNA) molecules. The large subunit (LSU) contains the ribosomal catalytic site termed the peptidyl transferase center (PTC), which catalyzes the formation of peptide bonds, thereby polymerizing the amino acids delivered by tRNAs into a polypeptide chain. The nascent polypeptides leave the ribosome through a tunnel in the LSU and interact with protein factors that function in enzymatic processing, targeting, and the membrane insertion of nascent chains at the exit of the ribosomal tunnel. This is Small ribosomal subunit protein uS8A (rps2201) from Schizosaccharomyces pombe (strain 972 / ATCC 24843) (Fission yeast).